We begin with the raw amino-acid sequence, 249 residues long: Expansin-A18 (249 aa).

Residues 1-21 form the signal peptide; that stretch reads MGNIVLQLLAILALCIAPARS. An Expansin-like EG45 domain is found at 41 to 154; that stretch reads GGACGYGNLY…QQVKCWRSGG (114 aa). A glycan (N-linked (GlcNAc...) asparagine) is linked at N116. The 80-residue stretch at 164-243 folds into the Expansin-like CBD domain; the sequence is YFELVLVTNM…GWSFGQTFST (80 aa).

This sequence belongs to the expansin family. Expansin A subfamily. In terms of tissue distribution, expressed in roots.

It is found in the secreted. Its subcellular location is the cell wall. The protein resides in the membrane. Functionally, may cause loosening and extension of plant cell walls by disrupting non-covalent bonding between cellulose microfibrils and matrix glucans. No enzymatic activity has been found. May be required for rapid internodal elongation in deepwater rice during submergence. The chain is Expansin-A18 (EXPA18) from Oryza sativa subsp. japonica (Rice).